We begin with the raw amino-acid sequence, 465 residues long: D(1C) dopamine receptor (465 aa).

At 1–30 (MENFSIFNVTVNVWHADLDVGNSDLSLRAL) the chain is on the extracellular side. 2 N-linked (GlcNAc...) asparagine glycosylation sites follow: N3 and N8. The helical transmembrane segment at 31–54 (TGLLLSLLILSTLLGNTLVCLAVI) threads the bilayer. Residues 55 to 65 (KFRHLRSKVTN) lie on the Cytoplasmic side of the membrane. The chain crosses the membrane as a helical span at residues 66-92 (FFVISLAVSDLFVALLVMPWKAVTEVA). Residues 93 to 101 (GFWVFGDFC) are Extracellular-facing. C101 and C187 are disulfide-bonded. A helical transmembrane segment spans residues 102–124 (DTWVAFDIMCSTASILNLCIISL). Residues 125–143 (DRYWAIASPFRYERKMTQR) are Cytoplasmic-facing. A helical membrane pass occupies residues 144-168 (VAFIMIGVAWTLSILISFIPVQLSW). Topologically, residues 169 to 193 (HKSHEADEELNGVNHTENCDSSLNR) are extracellular. Residues 194-219 (TYAISSSLISFYIPVVIMIGTYTRIY) form a helical membrane-spanning segment. The Cytoplasmic segment spans residues 220–264 (RIAQTQIRRISSLERAVEHAQRCSSRLSNENSLKTSFRKETKVLK). Residues 265-291 (TLSIIMGVFVFCWLPFFVLNCMIPFCH) traverse the membrane as a helical segment. Residues 292-309 (MNLPGQNEPEPPCVSETT) are Extracellular-facing. The chain crosses the membrane as a helical span at residues 310 to 334 (FNIFVWFGWANSSLNPVIYAFNADF). Topologically, residues 335 to 465 (RKAFTTILGC…EDRHYTTKLY (131 aa)) are cytoplasmic. C344 is lipidated: S-palmitoyl cysteine.

This sequence belongs to the G-protein coupled receptor 1 family. As to expression, brain and kidney.

It localises to the cell membrane. The protein localises to the cell projection. The protein resides in the cilium membrane. In terms of biological role, this is one of the five types (D1 to D5) of receptors for dopamine. The activity of this receptor is mediated by G proteins which activate adenylyl cyclase. In Xenopus laevis (African clawed frog), this protein is D(1C) dopamine receptor (drd1c).